The sequence spans 677 residues: DNA ligase (677 aa).

Residues 36 to 40 (DAEYD), 85 to 86 (SI), and Glu122 contribute to the NAD(+) site. Lys124 (N6-AMP-lysine intermediate) is an active-site residue. Residues Arg145, Glu181, Lys298, and Lys322 each coordinate NAD(+). Residues Cys416, Cys419, Cys434, and Cys440 each coordinate Zn(2+). Residues 600-677 (LTPRPLAGKT…DEAALRALLD (78 aa)) form the BRCT domain.

This sequence belongs to the NAD-dependent DNA ligase family. LigA subfamily. It depends on Mg(2+) as a cofactor. The cofactor is Mn(2+).

It carries out the reaction NAD(+) + (deoxyribonucleotide)n-3'-hydroxyl + 5'-phospho-(deoxyribonucleotide)m = (deoxyribonucleotide)n+m + AMP + beta-nicotinamide D-nucleotide.. Functionally, DNA ligase that catalyzes the formation of phosphodiester linkages between 5'-phosphoryl and 3'-hydroxyl groups in double-stranded DNA using NAD as a coenzyme and as the energy source for the reaction. It is essential for DNA replication and repair of damaged DNA. In Methylibium petroleiphilum (strain ATCC BAA-1232 / LMG 22953 / PM1), this protein is DNA ligase.